We begin with the raw amino-acid sequence, 30 residues long: Dermaseptin-S3 (30 aa).

It belongs to the frog skin active peptide (FSAP) family. Dermaseptin subfamily. In terms of assembly, monomer and oligomer. Forms aggregates in aqueous environments. As to expression, expressed by the skin glands.

Its subcellular location is the secreted. Functionally, potent antimicrobial peptide with activity against bacteria and protozoa. Also has activity against fungi. Probably acts by disturbing membrane functions with its amphipathic structure. Binds to healthy erythrocytes (this binding is receptor independent), but has very weak hemolytic activity. Does not bind to P.falciparum infected erythrocytes, but accumulates within the parasite. Kills the parasite, but has no hemolytic activity on the host cell. The sequence is that of Dermaseptin-S3 from Phyllomedusa sauvagei (Sauvage's leaf frog).